Reading from the N-terminus, the 283-residue chain is Putative 4-diphosphocytidyl-2-C-methyl-D-erythritol kinase (283 aa).

The active site involves K11. P95–S105 contacts ATP. D137 is a catalytic residue.

Belongs to the GHMP kinase family. IspE subfamily.

It carries out the reaction 4-CDP-2-C-methyl-D-erythritol + ATP = 4-CDP-2-C-methyl-D-erythritol 2-phosphate + ADP + H(+). Functionally, catalyzes the phosphorylation of the position 2 hydroxy group of 4-diphosphocytidyl-2C-methyl-D-erythritol. The sequence is that of Putative 4-diphosphocytidyl-2-C-methyl-D-erythritol kinase from Streptococcus equi subsp. equi (strain 4047).